Here is a 994-residue protein sequence, read N- to C-terminus: cGMP-dependent protein kinase (994 aa).

The tract at residues 1 to 162 (MGACISKNSS…QDDSHTEEEK (162 aa)) is disordered. A lipid anchor (N-myristoyl glycine) is attached at Gly2. Cys4 is lipidated: S-palmitoyl cysteine. Low complexity-rich tracts occupy residues 9-22 (SSARVSRSSALSAS) and 33-46 (GAAGDETSATGAAE). Basic and acidic residues-rich tracts occupy residues 65-80 (ELERAPDGVCPDREEP) and 133-162 (EGPKEKPGGDRKPAQKAILKQDDSHTEEEK). CNMP-binding domain stretches follow at residues 189–305 (VCSS…FLAS), 308–407 (FFEM…RVLG), 463–539 (GIRF…ATLG), and 561–660 (IFRY…NEII). Positions 253, 254, 256, 263, and 264 each coordinate 3',5'-cyclic GMP. 3',5'-cyclic GMP-binding residues include Arg616, Gly625, Glu626, Ala628, Arg635, and Thr636. In terms of domain architecture, Protein kinase spans 684–941 (LQVVRVVGRG…YKDIKEHAFF (258 aa)). Residues 690-698 (VGRGTFGTV) and Lys713 each bind ATP. Asp807 acts as the Proton acceptor in catalysis. The 53-residue stretch at 942–994 (GDFDWDKLAGRGLPPPLAPKGETYAEDTEQSSFELDEDDTIVLEDEYDWDKDF) folds into the AGC-kinase C-terminal domain. Positions 954–976 (LPPPLAPKGETYAEDTEQSSFEL) are disordered. Acidic residues predominate over residues 965–976 (YAEDTEQSSFEL).

The protein belongs to the protein kinase superfamily. AGC Ser/Thr protein kinase family. cGMP subfamily. Mg(2+) is required as a cofactor.

It localises to the cytoplasm. The protein localises to the membrane. It is found in the cell membrane. The enzyme catalyses L-seryl-[protein] + ATP = O-phospho-L-seryl-[protein] + ADP + H(+). It catalyses the reaction L-threonyl-[protein] + ATP = O-phospho-L-threonyl-[protein] + ADP + H(+). Activated by cGMP. The cGMP-binding domains acts cooperatively to activate PKG. Inhibited by the antiparasitic small molecule 4-[2-(4-fluorophenyl)-5-(1-methylpiperidine-4-yl)-1Hpyrrol- 3-yl]pyridine (compound 1). Its function is as follows. Serine/threonine protein kinase which acts as a downstream effector of the second messenger cGMP. Plays an essential role in tachyzoite invasion of and egress from host cells. During invasion of host cells, regulates the apico-basal flux of F-actin probably via Ca(2+)-mediated activation of CDPK1. In tachyzoites, required for microneme secretion. Required for tachyzoite gliding motility. Functionally, plays an essential role in parasite invasion of and egress from host cells, and microneme secretion. In terms of biological role, dispensable for parasite invasion of and egress from host cells, and microneme secretion. This chain is cGMP-dependent protein kinase, found in Toxoplasma gondii.